The following is a 644-amino-acid chain: Protein DA1-related 6 (644 aa).

UIM domains lie at 119–138, 181–200, and 244–263; these read EEDE…NNRR, DVDE…KGKG, and DEDE…KGQI. The LIM zinc-binding domain maps to 284 to 355; that stretch reads SLCGGCNFAV…YVCKEKKMKT (72 aa). The segment covering 572–589 has biased composition (low complexity); that stretch reads ASSSASSSSRTPPAASAS. A disordered region spans residues 572-591; it reads ASSSASSSSRTPPAASASKK.

Interacts with ubiquitin.

In terms of biological role, ubiquitin receptor that probably regulates developmental process. The chain is Protein DA1-related 6 (DAR6) from Arabidopsis thaliana (Mouse-ear cress).